We begin with the raw amino-acid sequence, 124 residues long: Large ribosomal subunit protein bL12 (124 aa).

The protein belongs to the bacterial ribosomal protein bL12 family. Homodimer. Part of the ribosomal stalk of the 50S ribosomal subunit. Forms a multimeric L10(L12)X complex, where L10 forms an elongated spine to which 2 to 4 L12 dimers bind in a sequential fashion. Binds GTP-bound translation factors.

Its function is as follows. Forms part of the ribosomal stalk which helps the ribosome interact with GTP-bound translation factors. Is thus essential for accurate translation. The polypeptide is Large ribosomal subunit protein bL12 (Burkholderia cenocepacia (strain HI2424)).